The following is a 430-amino-acid chain: Lipoyl synthase, chloroplastic (430 aa).

Over residues 1–16 the composition is skewed to polar residues; it reads MRSLATLHQSPASCSR. Residues 1–40 constitute a chloroplast transit peptide; that stretch reads MRSLATLHQSPASCSRSAPVAPCPARRANSSRRVARQGPR. Disordered stretches follow at residues 1-55 and 85-119; these read MRSL…SEDV and HLRSKSKSAAPVSPFAAPSPGSPSASSMLGPSLGA. A compositionally biased stretch (low complexity) spans 91 to 119; the sequence is KSAAPVSPFAAPSPGSPSASSMLGPSLGA. Residues Cys-155, Cys-160, Cys-166, Cys-183, Cys-187, Cys-190, and Ser-397 each coordinate [4Fe-4S] cluster. The region spanning 166-386 is the Radical SAM core domain; sequence CWNGELATAT…KFGQEEIGFR (221 aa).

This sequence belongs to the radical SAM superfamily. Lipoyl synthase family. [4Fe-4S] cluster is required as a cofactor.

The protein resides in the plastid. It localises to the chloroplast. It catalyses the reaction [[Fe-S] cluster scaffold protein carrying a second [4Fe-4S](2+) cluster] + N(6)-octanoyl-L-lysyl-[protein] + 2 oxidized [2Fe-2S]-[ferredoxin] + 2 S-adenosyl-L-methionine + 4 H(+) = [[Fe-S] cluster scaffold protein] + N(6)-[(R)-dihydrolipoyl]-L-lysyl-[protein] + 4 Fe(3+) + 2 hydrogen sulfide + 2 5'-deoxyadenosine + 2 L-methionine + 2 reduced [2Fe-2S]-[ferredoxin]. It functions in the pathway protein modification; protein lipoylation via endogenous pathway; protein N(6)-(lipoyl)lysine from octanoyl-[acyl-carrier-protein]: step 2/2. Functionally, catalyzes the radical-mediated insertion of two sulfur atoms into the C-6 and C-8 positions of the octanoyl moiety bound to the lipoyl domains of lipoate-dependent enzymes, thereby converting the octanoylated domains into lipoylated derivatives. This is Lipoyl synthase, chloroplastic from Chlamydomonas reinhardtii (Chlamydomonas smithii).